A 311-amino-acid polypeptide reads, in one-letter code: E3 ubiquitin-protein ligase RNF126 (311 aa).

Zn(2+) contacts are provided by C13, C16, C29, and C32. Residues 13 to 32 form a C4-type zinc finger; the sequence is CHSCTAEIIPRLPEYTCPRC. 2 disordered regions span residues 42–62 and 95–133; these read ETRN…NRPS and GTSG…RRAA. Over residues 101–114 the composition is skewed to basic and acidic residues; the sequence is EEPRDGESRREHQS. Over residues 123–133 the composition is skewed to basic residues; it reads PRARLSTRRAA. The RING-type zinc finger occupies 227 to 268; it reads CPVCKEDYTVGESVRQLPCNHLFHNDCIIPWLEQHDTCPVCR. The disordered stretch occupies residues 274-311; that stretch reads QNTATNPPGLTEMTFSSSSTSSSSSTSPTDENNAANNS. Over residues 289 to 300 the composition is skewed to low complexity; the sequence is SSSSTSSSSSTS. A compositionally biased stretch (polar residues) spans 301-311; that stretch reads PTDENNAANNS.

It is found in the cytoplasm. It localises to the nucleus. It catalyses the reaction S-ubiquitinyl-[E2 ubiquitin-conjugating enzyme]-L-cysteine + [acceptor protein]-L-lysine = [E2 ubiquitin-conjugating enzyme]-L-cysteine + N(6)-ubiquitinyl-[acceptor protein]-L-lysine.. It participates in protein modification; protein ubiquitination. E3 ubiquitin-protein ligase that mediates ubiquitination oF target proteins. Depending on the associated E2 ligase, mediates 'Lys-27'-, 'Lys-29'-, 'Lys-48'- and/or 'Lys-63'-linked polyubiquitination of substrates. Part of a BAG6-dependent quality control process ensuring that proteins of the secretory pathway that are mislocalized to the cytosol are degraded by the proteasome. Probably acts by providing the ubiquitin ligase activity associated with the BAG6 complex and be responsible for ubiquitination of the hydrophobic mislocalized proteins and their targeting to the proteasome. This is E3 ubiquitin-protein ligase RNF126 from Xenopus tropicalis (Western clawed frog).